The primary structure comprises 331 residues: MNWLVWALLLCSSAMAHVHRDPTLDHHWDLWKKTYGKQYKEKNEEVARRLIWEKNLKTVTLHNLEHSMGMHSYELGMNHLGDMTSEEVISLMSSLRVPSQWPRNVTYKSDPNQKLPDSMDWREKGCVTEVKYQGACGSCWAFSAVGALEAQVKLKTGKLVSLSAQNLVDCSTAKYGNKGCNGGFMTEAFQYIIDNNGIDSEASYPYKAMDGKCQYDVKNRAATCSRYIELPFGSEEALKEAVANKGPVSVGIDASHSSFFLYKTGVYYDPSCTQNVNHGVLVVGYGNLDGKDYWLVKNSWGLHFGDQGYIRMARNSGNHCGIANYPSYPEI.

The N-terminal stretch at 1–16 is a signal peptide; that stretch reads MNWLVWALLLCSSAMA. Residues 17-114 constitute a propeptide, activation peptide; it reads HVHRDPTLDH…VTYKSDPNQK (98 aa). Asn104 carries an N-linked (GlcNAc...) asparagine glycan. 4 cysteine pairs are disulfide-bonded: Cys126–Cys224, Cys136–Cys180, Cys170–Cys213, and Cys272–Cys320. Cys139 is an active-site residue. Catalysis depends on residues His278 and Asn298.

Belongs to the peptidase C1 family. Monomer.

The protein localises to the lysosome. The protein resides in the secreted. It localises to the cytoplasmic vesicle. Its subcellular location is the phagosome. It catalyses the reaction Similar to cathepsin L, but with much less activity on Z-Phe-Arg-|-NHMec, and more activity on the Z-Val-Val-Arg-|-Xaa compound.. In terms of biological role, thiol protease. Key protease responsible for the removal of the invariant chain from MHC class II molecules and MHC class II antigen presentation. The bond-specificity of this proteinase is in part similar to the specificities of cathepsin L. This Bos taurus (Bovine) protein is Cathepsin S (CTSS).